The sequence spans 264 residues: uncharacterized protein (264 aa).

A disordered region spans residues 235 to 264; the sequence is ESSDEEDNDDDIINNDTNNDINNDDIEIKT. The segment covering 237–247 has biased composition (acidic residues); that stretch reads SDEEDNDDDII.

This is an uncharacterized protein from Acanthamoeba polyphaga mimivirus (APMV).